The chain runs to 262 residues: Glutamate racemase (262 aa).

Residues 10-11 (DS) and 42-43 (FG) contribute to the substrate site. The active-site Proton donor/acceptor is C74. A substrate-binding site is contributed by 75-76 (NT). C189 acts as the Proton donor/acceptor in catalysis. 190–191 (TH) contacts substrate.

This sequence belongs to the aspartate/glutamate racemases family.

The catalysed reaction is L-glutamate = D-glutamate. It functions in the pathway cell wall biogenesis; peptidoglycan biosynthesis. In terms of biological role, provides the (R)-glutamate required for cell wall biosynthesis. This Mesorhizobium japonicum (strain LMG 29417 / CECT 9101 / MAFF 303099) (Mesorhizobium loti (strain MAFF 303099)) protein is Glutamate racemase.